Reading from the N-terminus, the 399-residue chain is Elongation factor Tu (399 aa).

The 195-residue stretch at 10–204 (KPHVNIGTIG…SVDESIPEPE (195 aa)) folds into the tr-type G domain. Residues 19-26 (GHVDHGKT) are G1. Residue 19–26 (GHVDHGKT) coordinates GTP. Residue Thr26 coordinates Mg(2+). Positions 60 to 64 (GITIN) are G2. The tract at residues 81-84 (DCPG) is G3. Residues 81-85 (DCPGH) and 136-139 (NKCD) contribute to the GTP site. The tract at residues 136-139 (NKCD) is G4. Residues 174-176 (SAL) form a G5 region.

It belongs to the TRAFAC class translation factor GTPase superfamily. Classic translation factor GTPase family. EF-Tu/EF-1A subfamily. Monomer.

The protein localises to the cytoplasm. The enzyme catalyses GTP + H2O = GDP + phosphate + H(+). GTP hydrolase that promotes the GTP-dependent binding of aminoacyl-tRNA to the A-site of ribosomes during protein biosynthesis. This chain is Elongation factor Tu, found in Prochlorococcus marinus (strain MIT 9211).